The following is a 488-amino-acid chain: Palmitoyltransferase ZDHHC14 (488 aa).

Residues 1-60 lie on the Cytoplasmic side of the membrane; the sequence is MPPGGGGPMKDCEYSQISTHSSSPMESPHKKKKIAARRKWEVFPGRNKFFCNGRIMMARQ. A helical membrane pass occupies residues 61 to 81; the sequence is TGVFYLTLVLILVTSGLFFAF. Residues 82–89 lie on the Lumenal side of the membrane; it reads DCPYLAVK. Residues 90–110 traverse the membrane as a helical segment; the sequence is ITPAIPAVAGILFFFVMGTLL. At 111 to 208 the chain is on the cytoplasmic side; sequence RTSFSDPGVL…GNCVGKRNYR (98 aa). Residues 165-215 enclose the DHHC domain; the sequence is KYCFTCKIFRPPRASHCSLCDNCVERFDHHCPWVGNCVGKRNYRFFYMFIL. The active-site S-palmitoyl cysteine intermediate is Cys-195. A helical membrane pass occupies residues 209-229; that stretch reads FFYMFILSLSFLTVFIFAFVI. The Lumenal portion of the chain corresponds to 230 to 255; that stretch reads THVILRSQQTGFLNALKDSPASVLEA. The helical transmembrane segment at 256–276 threads the bilayer; it reads VVCFFSVWSIVGLSGFHTYLI. Topologically, residues 277 to 488 are cytoplasmic; it reads SSNQTTNEDI…VRGLVKLSSV (212 aa). Ser-455 carries the phosphoserine modification.

It belongs to the DHHC palmitoyltransferase family. ERF2/ZDHHC9 subfamily. As to expression, widely expressed.

It is found in the endoplasmic reticulum membrane. Its subcellular location is the golgi apparatus. The protein resides in the golgi stack membrane. The catalysed reaction is L-cysteinyl-[protein] + hexadecanoyl-CoA = S-hexadecanoyl-L-cysteinyl-[protein] + CoA. Functionally, palmitoyltransferase that could catalyze the addition of palmitate onto various protein substrates. May have a palmitoyltransferase activity toward the beta-2 adrenergic receptor/ADRB2 and thereby regulate G protein-coupled receptor signaling. May play a role in cell differentiation and apoptosis. The protein is Palmitoyltransferase ZDHHC14 of Homo sapiens (Human).